The following is a 566-amino-acid chain: Mitochondrial distribution and morphology protein 34 (566 aa).

Positions 1-195 (MAFNFNWSPL…LPAIIHRLSL (195 aa)) constitute an SMP-LTD domain. Disordered stretches follow at residues 212 to 237 (PEQT…DSLG), 349 to 401 (GYGL…NPSV), 432 to 518 (PERR…SSST), and 539 to 566 (KLMP…AYGQ). The segment covering 358-370 (RHSKAHSRKRKKR) has biased composition (basic residues). Residues 380 to 401 (TSDTASVSDESAYTETASNPSV) are compositionally biased toward polar residues. Positions 444 to 454 (PRRDIATEMLR) are enriched in basic and acidic residues.

The protein belongs to the MDM34 family. Component of the ER-mitochondria encounter structure (ERMES) or MDM complex, composed of mmm1, mdm10, mdm12 and mdm34.

The protein localises to the mitochondrion outer membrane. Component of the ERMES/MDM complex, which serves as a molecular tether to connect the endoplasmic reticulum (ER) and mitochondria. Components of this complex are involved in the control of mitochondrial shape and protein biogenesis, and function in nonvesicular lipid trafficking between the ER and mitochondria. Mdm34 is required for the interaction of the ER-resident membrane protein mmm1 and the outer mitochondrial membrane-resident beta-barrel protein mdm10. In Aspergillus flavus (strain ATCC 200026 / FGSC A1120 / IAM 13836 / NRRL 3357 / JCM 12722 / SRRC 167), this protein is Mitochondrial distribution and morphology protein 34.